The primary structure comprises 307 residues: Metapyrocatechase (307 aa).

VOC domains follow at residues 7–122 (RPGH…LYAD) and 150–269 (RFDH…VFCG). Fe cation is bound by residues His153, His214, and Glu265.

It belongs to the extradiol ring-cleavage dioxygenase family. In terms of assembly, homotetramer. It depends on Fe(2+) as a cofactor.

The enzyme catalyses catechol + O2 = (2Z,4E)-2-hydroxy-6-oxohexa-2,4-dienoate + H(+). It functions in the pathway xenobiotic degradation; toluene degradation. This Pseudomonas putida (Arthrobacter siderocapsulatus) protein is Metapyrocatechase (xylE).